The following is a 126-amino-acid chain: Alpha-1-purothionin (126 aa).

The first 16 residues, Cys-1–Gly-16, serve as a signal peptide directing secretion. Cystine bridges form between Cys-19–Cys-55, Cys-20–Cys-47, Cys-28–Cys-45, and Cys-32–Cys-41. Residues Leu-62–Tyr-126 constitute a propeptide, acidic domain.

It belongs to the plant thionin (TC 1.C.44) family. 4 C-C subfamily.

Its subcellular location is the secreted. In terms of biological role, thionins are small plant proteins which are toxic to animal cells. They seem to exert their toxic effect at the level of the cell membrane. Their precise function is not known. The protein is Alpha-1-purothionin (THI1.1) of Triticum aestivum (Wheat).